The following is a 446-amino-acid chain: Sorting nexin-30 (446 aa).

Residues 1–18 (MSGSSTPKSLPTSGQQSL) are compositionally biased toward polar residues. Positions 1 to 84 (MSGSSTPKSL…SSPASSSSLL (84 aa)) are disordered. Over residues 70–84 (TPADTSSPASSSSLL) the composition is skewed to low complexity. In terms of domain architecture, PX spans 98-219 (RDLFVTVDDP…VFLTAKDLNS (122 aa)). Residues Arg-141, Gln-143, Lys-171, and Arg-185 each coordinate a 1,2-diacyl-sn-glycero-3-phospho-(1D-myo-inositol-3-phosphate). Positions 243–446 (KLRNRPVEFA…PLLQDKQEPK (204 aa)) constitute a BAR domain.

Belongs to the sorting nexin family.

The protein localises to the early endosome membrane. Involved in the regulation of endocytosis and in several stages of intracellular trafficking. Together with snx4, involved in autophagosome assembly. The protein is Sorting nexin-30 (snx30) of Xenopus tropicalis (Western clawed frog).